The following is a 1116-amino-acid chain: Anillin (1116 aa).

Composition is skewed to basic and acidic residues over residues 1 to 25 (MDPF…KMAD) and 85 to 94 (KQPKTPELPK). Disordered regions lie at residues 1–188 (MDPF…PVGR), 205–257 (DLSH…PKDT), 304–363 (KPNE…KVAT), and 443–522 (NVWT…PRLV). The segment covering 101-119 (ASHQQLRATNQTPQVSLLS) has biased composition (polar residues). The span at 120-133 (SDKELTASDVKDAS) shows a compositional bias: basic and acidic residues. Residues 142–254 (LADQRRYWDN…QDTTSCSQRP (113 aa)) are interactions with myh9 and myh10. Low complexity predominate over residues 226–242 (SKESTTSSASASMNSHS). An interaction with F-actin region spans residues 255–418 (KDTTVNKAVC…LKQNDISSTA (164 aa)). Polar residues-rich tracts occupy residues 304–326 (KPNE…SSPQ) and 336–356 (YSYQ…VQTQ). Positions 416 to 443 (STASLAQQQKKEREKELAALRGRYDRRN) form a coiled coil. The segment covering 453–472 (QGTFPETSSNLPTSDVASCS) has biased composition (polar residues). The PH domain maps to 975-1099 (SVEDKGFLTM…WMQKLNQFLV (125 aa)).

Interacts with and bundles F-actin. Interacts with the non-muscle myosin II heavy chains myh9 and myh10, and these interactions may be enhanced by the phosphorylation of myosin II regulatory light chain by mylk.

Its subcellular location is the nucleus. It localises to the cytoplasm. The protein localises to the cytoskeleton. It is found in the cell cortex. The protein resides in the cell projection. Its subcellular location is the bleb. In terms of biological role, required for cytokinesis. Essential for the structural integrity of the cleavage furrow and for completion of cleavage furrow ingression. Plays a role in bleb assembly during metaphase and anaphase of mitosis. May play a significant role in podocyte cell migration. The protein is Anillin (anln) of Xenopus laevis (African clawed frog).